A 476-amino-acid chain; its full sequence is Bifunctional protein HldE (476 aa).

The segment at 1–318 (MLSKKPNILV…EYESSLHKSN (318 aa)) is ribokinase. 195 to 198 (NKKE) lines the ATP pocket. Residue D263 is part of the active site. The cytidylyltransferase stretch occupies residues 345–476 (FTNGCFDILH…RIQENEKCNN (132 aa)).

The protein in the N-terminal section; belongs to the carbohydrate kinase PfkB family. It in the C-terminal section; belongs to the cytidylyltransferase family. Homodimer.

It carries out the reaction D-glycero-beta-D-manno-heptose 7-phosphate + ATP = D-glycero-beta-D-manno-heptose 1,7-bisphosphate + ADP + H(+). It catalyses the reaction D-glycero-beta-D-manno-heptose 1-phosphate + ATP + H(+) = ADP-D-glycero-beta-D-manno-heptose + diphosphate. It functions in the pathway nucleotide-sugar biosynthesis; ADP-L-glycero-beta-D-manno-heptose biosynthesis; ADP-L-glycero-beta-D-manno-heptose from D-glycero-beta-D-manno-heptose 7-phosphate: step 1/4. Its pathway is nucleotide-sugar biosynthesis; ADP-L-glycero-beta-D-manno-heptose biosynthesis; ADP-L-glycero-beta-D-manno-heptose from D-glycero-beta-D-manno-heptose 7-phosphate: step 3/4. Catalyzes the phosphorylation of D-glycero-D-manno-heptose 7-phosphate at the C-1 position to selectively form D-glycero-beta-D-manno-heptose-1,7-bisphosphate. Its function is as follows. Catalyzes the ADP transfer from ATP to D-glycero-beta-D-manno-heptose 1-phosphate, yielding ADP-D-glycero-beta-D-manno-heptose. The chain is Bifunctional protein HldE from Aliarcobacter butzleri (strain RM4018) (Arcobacter butzleri).